An 86-amino-acid polypeptide reads, in one-letter code: Large ribosomal subunit protein bL31 (86 aa).

Residues 66–86 (GMGSANSATSKEQKADKDSQK) form a disordered region. A compositionally biased stretch (basic and acidic residues) spans 76–86 (KEQKADKDSQK).

This sequence belongs to the bacterial ribosomal protein bL31 family. Type A subfamily. In terms of assembly, part of the 50S ribosomal subunit.

In terms of biological role, binds the 23S rRNA. The chain is Large ribosomal subunit protein bL31 from Prochlorococcus marinus (strain MIT 9215).